The chain runs to 417 residues: Gamma-glutamyl phosphate reductase (417 aa).

It belongs to the gamma-glutamyl phosphate reductase family.

Its subcellular location is the cytoplasm. It catalyses the reaction L-glutamate 5-semialdehyde + phosphate + NADP(+) = L-glutamyl 5-phosphate + NADPH + H(+). The protein operates within amino-acid biosynthesis; L-proline biosynthesis; L-glutamate 5-semialdehyde from L-glutamate: step 2/2. Catalyzes the NADPH-dependent reduction of L-glutamate 5-phosphate into L-glutamate 5-semialdehyde and phosphate. The product spontaneously undergoes cyclization to form 1-pyrroline-5-carboxylate. The protein is Gamma-glutamyl phosphate reductase of Klebsiella pneumoniae subsp. pneumoniae (strain ATCC 700721 / MGH 78578).